Reading from the N-terminus, the 611-residue chain is E-selectin (611 aa).

Residues 1–22 form the signal peptide; that stretch reads MITSQLLPALTLVLLLFKEGGA. Positions 23–140 constitute a C-type lectin domain; that stretch reads WSYNASTEAM…CDKKKLALCY (118 aa). Over 23-557 the chain is Extracellular; it reads WSYNASTEAM…CEAPTESSIP (535 aa). A glycan (N-linked (GlcNAc...) asparagine) is linked at Asn26. 19 disulfides stabilise this stretch: Cys41-Cys139, Cys112-Cys131, Cys144-Cys155, Cys149-Cys164, Cys166-Cys175, Cys181-Cys225, Cys194-Cys207, Cys211-Cys238, Cys243-Cys287, Cys256-Cys269, Cys273-Cys300, Cys305-Cys350, Cys336-Cys363, Cys368-Cys413, Cys399-Cys426, Cys431-Cys476, Cys462-Cys489, Cys494-Cys535, and Cys521-Cys548. Ca(2+)-binding residues include Glu102, Asn104, and Glu110. A carbohydrate contacts are provided by residues 102–110, 114–119, and 127–129; these read EPNNKQNDE, EIYIKR, and NDE. Residues Asn127 and Asp128 each coordinate Ca(2+). The EGF-like domain occupies 141-176; the sequence is TAACTPTSCSGHGECVETVNNYTCKCHPGFRGLRCE. N-linked (GlcNAc...) asparagine glycosylation occurs at Asn161. 2 consecutive Sushi domains span residues 179-240 and 241-302; these read VTCQ…ACNV and VECS…TCKA. The N-linked (GlcNAc...) asparagine glycan is linked to Asn204. The N-linked (GlcNAc...) asparagine glycan is linked to Asn266. 2 N-linked (GlcNAc...) asparagine glycosylation sites follow: Asn313 and Asn333. Sushi domains are found at residues 316–365, 367–428, 430–491, and 492–550; these read VSCS…VCKA, QCKA…TCEA, KCDA…SCQV, and VQCF…TCEA. Residue Asn528 is glycosylated (N-linked (GlcNAc...) asparagine). A helical transmembrane segment spans residues 558–579; sequence LAVGLTAGGTSLLTVASFLLWL. The Cytoplasmic segment spans residues 580–611; the sequence is LKRLRKRAKKFVPASSCQSLQSDGSYHMPCSI.

Belongs to the selectin/LECAM family. As to quaternary structure, interacts with SELPLG/PSGL1 and PODXL2 through the sialyl Lewis X epitope. SELPLG sulfation appears not to be required for this interaction.

Its subcellular location is the cell membrane. Its function is as follows. Cell-surface glycoprotein having a role in immunoadhesion. Mediates in the adhesion of blood neutrophils in cytokine-activated endothelium through interaction with SELPLG/PSGL1. May have a role in capillary morphogenesis. In Canis lupus familiaris (Dog), this protein is E-selectin (SELE).